The sequence spans 948 residues: Phosphoenolpyruvate carboxylase (948 aa).

Residues His138 and Lys610 contribute to the active site.

Belongs to the PEPCase type 1 family. The cofactor is Mg(2+).

It carries out the reaction oxaloacetate + phosphate = phosphoenolpyruvate + hydrogencarbonate. Functionally, forms oxaloacetate, a four-carbon dicarboxylic acid source for the tricarboxylic acid cycle. The chain is Phosphoenolpyruvate carboxylase from Streptococcus sanguinis (strain SK36).